A 122-amino-acid polypeptide reads, in one-letter code: Large ribosomal subunit protein uL14 (122 aa).

This sequence belongs to the universal ribosomal protein uL14 family. As to quaternary structure, part of the 50S ribosomal subunit. Forms a cluster with proteins L3 and L19. In the 70S ribosome, L14 and L19 interact and together make contacts with the 16S rRNA in bridges B5 and B8.

Its function is as follows. Binds to 23S rRNA. Forms part of two intersubunit bridges in the 70S ribosome. This chain is Large ribosomal subunit protein uL14, found in Parafrankia sp. (strain EAN1pec).